The sequence spans 332 residues: Glycerol-3-phosphate dehydrogenase [NAD(P)+] (332 aa).

NADPH is bound by residues Ser-11, Trp-12, Arg-32, Arg-33, and Lys-106. Residues Lys-106 and Gly-136 each contribute to the sn-glycerol 3-phosphate site. Position 140 (Ala-140) interacts with NADPH. Residues Lys-191, Asp-244, Ser-254, Arg-255, and Asn-256 each coordinate sn-glycerol 3-phosphate. Lys-191 serves as the catalytic Proton acceptor. Position 255 (Arg-255) interacts with NADPH. Val-280 and Glu-282 together coordinate NADPH.

This sequence belongs to the NAD-dependent glycerol-3-phosphate dehydrogenase family.

It localises to the cytoplasm. It carries out the reaction sn-glycerol 3-phosphate + NAD(+) = dihydroxyacetone phosphate + NADH + H(+). The enzyme catalyses sn-glycerol 3-phosphate + NADP(+) = dihydroxyacetone phosphate + NADPH + H(+). It participates in membrane lipid metabolism; glycerophospholipid metabolism. In terms of biological role, catalyzes the reduction of the glycolytic intermediate dihydroxyacetone phosphate (DHAP) to sn-glycerol 3-phosphate (G3P), the key precursor for phospholipid synthesis. This chain is Glycerol-3-phosphate dehydrogenase [NAD(P)+], found in Corynebacterium urealyticum (strain ATCC 43042 / DSM 7109).